A 90-amino-acid polypeptide reads, in one-letter code: Barrier-to-autointegration factor B (90 aa).

The protein belongs to the BAF family. In terms of assembly, homodimer. Interacts with nemp1a and nemp1b.

Its subcellular location is the nucleus. The protein resides in the chromosome. It is found in the nucleus envelope. It localises to the cytoplasm. Its function is as follows. Non-specific DNA-binding protein that plays key roles in mitotic nuclear reassembly, chromatin organization, DNA damage response, gene expression and intrinsic immunity against foreign DNA. Contains two non-specific double-stranded DNA (dsDNA)-binding sites which promote DNA cross-bridging. Plays a key role in nuclear membrane reformation at the end of mitosis by driving formation of a single nucleus in a spindle-independent manner. Transiently cross-bridges anaphase chromosomes via its ability to bridge distant DNA sites, leading to the formation of a dense chromatin network at the chromosome ensemble surface that limits membranes to the surface. Also acts as a negative regulator of innate immune activation by restricting CGAS activity toward self-DNA upon acute loss of nuclear membrane integrity. Outcompetes CGAS for DNA-binding, thereby preventing CGAS activation and subsequent damaging autoinflammatory responses. Also involved in DNA damage response; acts by inhibiting the ADP-ribosyltransferase activity of PARP1. Involved in the recognition of exogenous dsDNA in the cytosol: associates with exogenous dsDNA immediately after its appearance in the cytosol at endosome breakdown and is required to avoid autophagy. This Xenopus laevis (African clawed frog) protein is Barrier-to-autointegration factor B (banf1-b).